A 535-amino-acid chain; its full sequence is MASLSLAPVNIFKAGADEERAETARLTSFIGAIAIGDLVKSTLGPKGMDKILLSSGRDASLMVTNDGATILKNIGVDNPAAKVLVDMSRVQDDEVGDGTTSVTVLAAELLREAESLIAKKIHPQTIIAGWREATKAAREALLSSAVDHGSDEVKFRQDLMNIAGTTLSSKLLTHHKDHFTKLAVEAVLRLKGSGNLEAIHIIKKLGGSLADSYLDEGFLLDKKIGVNQPKRIENAKILIANTGMDTDKIKIFGSRVRVDSTAKVAEIEHAEKEKMKEKVERILKHGINCFINRQLIYNYPEQLFGAAGVMAIEHADFAGVERLALVTGGEIASTFDHPELVKLGSCKLIEEVMIGEDKLIHFSGVALGEACTIVLRGATQQILDEAERSLHDALCVLAQTVKDSRTVYGGGCSEMLMAHAVTQLANRTPGKEAVAMESYAKALRMLPTIIADNAGYDSADLVAQLRAAHSEGNTTAGLDMREGTIGDMAILGITESFQVKRQVLLSAAEAAEVILRVDNIIKAAPRKRVPDHHPC.

M1 carries the N-acetylmethionine modification. At A2 the chain carries N-acetylalanine. S3 carries the post-translational modification Phosphoserine. K13 is subject to N6-acetyllysine. Position 44 (G44) interacts with ADP. G44 is a binding site for ATP. S60 bears the Phosphoserine mark. D97 lines the Mg(2+) pocket. Positions 98, 99, 100, and 101 each coordinate ADP. G98, T99, and T100 together coordinate ATP. An N6-acetyllysine modification is found at K154. ADP contacts are provided by S168 and S169. The residue at position 181 (K181) is an N6-acetyllysine. K248 is covalently cross-linked (Glycyl lysine isopeptide (Lys-Gly) (interchain with G-Cter in SUMO2)). S260 carries the post-translational modification Phosphoserine. T261 bears the Phosphothreonine mark. 3 residues coordinate ADP: G410, E495, and K500. E495 and K500 together coordinate ATP.

This sequence belongs to the TCP-1 chaperonin family. In terms of assembly, component of the chaperonin-containing T-complex (TRiC), a hexadecamer composed of two identical back-to-back stacked rings enclosing a protein folding chamber. Each ring is made up of eight different subunits: TCP1/CCT1, CCT2, CCT3, CCT4, CCT5, CCT6A/CCT6, CCT7, CCT8. Interacts with PACRG. Interacts with FLCN. Interacts with DLEC1. Interacts with SVEP1.

The protein localises to the cytoplasm. It carries out the reaction ATP + H2O = ADP + phosphate + H(+). Functionally, component of the chaperonin-containing T-complex (TRiC), a molecular chaperone complex that assists the folding of actin, tubulin and other proteins upon ATP hydrolysis. The TRiC complex mediates the folding of WRAP53/TCAB1, thereby regulating telomere maintenance. As part of the TRiC complex may play a role in the assembly of BBSome, a complex involved in ciliogenesis regulating transports vesicles to the cilia. This is T-complex protein 1 subunit beta from Homo sapiens (Human).